Consider the following 204-residue polypeptide: N-(5'-phosphoribosyl)anthranilate isomerase (204 aa).

Belongs to the TrpF family.

It carries out the reaction N-(5-phospho-beta-D-ribosyl)anthranilate = 1-(2-carboxyphenylamino)-1-deoxy-D-ribulose 5-phosphate. It participates in amino-acid biosynthesis; L-tryptophan biosynthesis; L-tryptophan from chorismate: step 3/5. The polypeptide is N-(5'-phosphoribosyl)anthranilate isomerase (Bacillus anthracis (strain A0248)).